Consider the following 306-residue polypeptide: Glutaminase (306 aa).

S64, N115, E159, N166, Y190, Y242, and V260 together coordinate substrate.

This sequence belongs to the glutaminase family. In terms of assembly, homotetramer.

The catalysed reaction is L-glutamine + H2O = L-glutamate + NH4(+). This Aeromonas salmonicida (strain A449) protein is Glutaminase.